The primary structure comprises 368 residues: Homoserine O-acetyltransferase (368 aa).

An AB hydrolase-1 domain is found at 41–352 (NVILITHALS…DYGHDSFLVE (312 aa)). The active-site Nucleophile is Ser147. Residue Arg219 coordinates substrate. Residues Asp313 and His346 contribute to the active site. Residue Asp347 coordinates substrate.

Belongs to the AB hydrolase superfamily. MetX family. As to quaternary structure, homodimer.

The protein resides in the cytoplasm. It carries out the reaction L-homoserine + acetyl-CoA = O-acetyl-L-homoserine + CoA. It participates in amino-acid biosynthesis; L-methionine biosynthesis via de novo pathway; O-acetyl-L-homoserine from L-homoserine: step 1/1. Functionally, transfers an acetyl group from acetyl-CoA to L-homoserine, forming acetyl-L-homoserine. The polypeptide is Homoserine O-acetyltransferase (Nautilia profundicola (strain ATCC BAA-1463 / DSM 18972 / AmH)).